The sequence spans 122 residues: Holo-[acyl-carrier-protein] synthase (122 aa).

Residues aspartate 5 and glutamate 54 each coordinate Mg(2+).

This sequence belongs to the P-Pant transferase superfamily. AcpS family. Requires Mg(2+) as cofactor.

Its subcellular location is the cytoplasm. The catalysed reaction is apo-[ACP] + CoA = holo-[ACP] + adenosine 3',5'-bisphosphate + H(+). Functionally, transfers the 4'-phosphopantetheine moiety from coenzyme A to a Ser of acyl-carrier-protein. The polypeptide is Holo-[acyl-carrier-protein] synthase (Aquifex aeolicus (strain VF5)).